The primary structure comprises 88 residues: RNA-binding protein Hfq (88 aa).

The Sm domain occupies 9-68 (DPFLNALRCERIPVSIYLVNGIKLQGQIESFDQFVILLKNTVNQMVYKHAISTVVPARAV). The disordered stretch occupies residues 66-88 (RAVSHHTASDRPQGERPQETTEE). A compositionally biased stretch (basic and acidic residues) spans 72–88 (TASDRPQGERPQETTEE).

The protein belongs to the Hfq family. Homohexamer.

Its function is as follows. RNA chaperone that binds small regulatory RNA (sRNAs) and mRNAs to facilitate mRNA translational regulation in response to envelope stress, environmental stress and changes in metabolite concentrations. Also binds with high specificity to tRNAs. This chain is RNA-binding protein Hfq, found in Aliivibrio salmonicida (strain LFI1238) (Vibrio salmonicida (strain LFI1238)).